A 38-amino-acid polypeptide reads, in one-letter code: Large ribosomal subunit protein bL36 (38 aa).

The protein belongs to the bacterial ribosomal protein bL36 family.

The chain is Large ribosomal subunit protein bL36 from Azotobacter vinelandii (strain DJ / ATCC BAA-1303).